We begin with the raw amino-acid sequence, 217 residues long: Ras-related protein Rab-19 (217 aa).

GTP is bound by residues Ser26, Val28, Gly29, Lys30, Thr31, Cys32, Tyr42, Glu44, and Thr49. Thr31 is a Mg(2+) binding site. Positions 39–54 (SGVYMEAQQNTIGVDF) match the Switch 1 motif. The Mg(2+) site is built by Thr49 and Asp72. The short motif at 74 to 89 (AGQERFRTITQSYYRS) is the Switch 2 element. GTP contacts are provided by Gly75, Asn130, Lys131, Asp133, Ser161, Ala162, and Lys163. S-geranylgeranyl cysteine attachment occurs at residues Cys215 and Cys217. Cys217 carries the cysteine methyl ester modification.

This sequence belongs to the small GTPase superfamily. Rab family. It depends on Mg(2+) as a cofactor.

It is found in the cell membrane. The enzyme catalyses GTP + H2O = GDP + phosphate + H(+). With respect to regulation, regulated by guanine nucleotide exchange factors (GEFs) which promote the exchange of bound GDP for free GTP. Regulated by GTPase activating proteins (GAPs) which increase the GTP hydrolysis activity. Inhibited by GDP dissociation inhibitors (GDIs). In terms of biological role, the small GTPases Rab are key regulators of intracellular membrane trafficking, from the formation of transport vesicles to their fusion with membranes. Rabs cycle between an inactive GDP-bound form and an active GTP-bound form that is able to recruit to membranes different set of downstream effectors directly responsible for vesicle formation, movement, tethering and fusion. The chain is Ras-related protein Rab-19 (RAB19) from Bos taurus (Bovine).